Reading from the N-terminus, the 421-residue chain is 4-hydroxy-3-methylbut-2-en-1-yl diphosphate synthase (flavodoxin) (421 aa).

Cys300, Cys303, Cys346, and Glu353 together coordinate [4Fe-4S] cluster.

Belongs to the IspG family. The cofactor is [4Fe-4S] cluster.

It catalyses the reaction (2E)-4-hydroxy-3-methylbut-2-enyl diphosphate + oxidized [flavodoxin] + H2O + 2 H(+) = 2-C-methyl-D-erythritol 2,4-cyclic diphosphate + reduced [flavodoxin]. It functions in the pathway isoprenoid biosynthesis; isopentenyl diphosphate biosynthesis via DXP pathway; isopentenyl diphosphate from 1-deoxy-D-xylulose 5-phosphate: step 5/6. In terms of biological role, converts 2C-methyl-D-erythritol 2,4-cyclodiphosphate (ME-2,4cPP) into 1-hydroxy-2-methyl-2-(E)-butenyl 4-diphosphate. In Laribacter hongkongensis (strain HLHK9), this protein is 4-hydroxy-3-methylbut-2-en-1-yl diphosphate synthase (flavodoxin).